The chain runs to 734 residues: Photosystem I P700 chlorophyll a apoprotein A2 (734 aa).

The next 8 helical transmembrane spans lie at 46 to 69 (IFASHFGQLAIIFLWTSGNLFHVA), 135 to 158 (LYTGALFLLFLSALSLIGGWLHLQ), 175 to 199 (LNHHLSGLFGVSSLAWTGHLVHVAI), 273 to 291 (MAHHHLAIAILFLIAGHMY), 330 to 353 (IHFQLGLALASLGVITSLVAQHMY), 369 to 395 (AALYTHHQYIAGFIMTGAFAHGAIFFI), 417 to 439 (AIISHLSWASLFLGFHTLGLYVH), and 517 to 535 (FLVHHAIALGLHTTTLILV). [4Fe-4S] cluster-binding residues include C559 and C568. 2 helical membrane passes run 575–596 (AFYLAVFWMLNTIGWVTFYWHW) and 643–665 (LSVWAWMFLFGHLVWATGFMFLI). 3 residues coordinate chlorophyll a: H654, M662, and Y670. Phylloquinone is bound at residue W671. Residues 707 to 727 (LVGLAHFSVGYIFTYAAFLIA) traverse the membrane as a helical segment.

The protein belongs to the PsaA/PsaB family. The PsaA/B heterodimer binds the P700 chlorophyll special pair and subsequent electron acceptors. PSI consists of a core antenna complex that captures photons, and an electron transfer chain that converts photonic excitation into a charge separation. The eukaryotic PSI reaction center is composed of at least 11 subunits. It depends on P700 is a chlorophyll a/chlorophyll a' dimer, A0 is one or more chlorophyll a, A1 is one or both phylloquinones and FX is a shared 4Fe-4S iron-sulfur center. as a cofactor.

The protein resides in the plastid. It localises to the chloroplast thylakoid membrane. It catalyses the reaction reduced [plastocyanin] + hnu + oxidized [2Fe-2S]-[ferredoxin] = oxidized [plastocyanin] + reduced [2Fe-2S]-[ferredoxin]. In terms of biological role, psaA and PsaB bind P700, the primary electron donor of photosystem I (PSI), as well as the electron acceptors A0, A1 and FX. PSI is a plastocyanin-ferredoxin oxidoreductase, converting photonic excitation into a charge separation, which transfers an electron from the donor P700 chlorophyll pair to the spectroscopically characterized acceptors A0, A1, FX, FA and FB in turn. Oxidized P700 is reduced on the lumenal side of the thylakoid membrane by plastocyanin. In Capsella bursa-pastoris (Shepherd's purse), this protein is Photosystem I P700 chlorophyll a apoprotein A2.